A 421-amino-acid polypeptide reads, in one-letter code: Gamma-glutamyl phosphate reductase (421 aa).

It belongs to the gamma-glutamyl phosphate reductase family.

It localises to the cytoplasm. The catalysed reaction is L-glutamate 5-semialdehyde + phosphate + NADP(+) = L-glutamyl 5-phosphate + NADPH + H(+). It functions in the pathway amino-acid biosynthesis; L-proline biosynthesis; L-glutamate 5-semialdehyde from L-glutamate: step 2/2. Its function is as follows. Catalyzes the NADPH-dependent reduction of L-glutamate 5-phosphate into L-glutamate 5-semialdehyde and phosphate. The product spontaneously undergoes cyclization to form 1-pyrroline-5-carboxylate. This Shewanella pealeana (strain ATCC 700345 / ANG-SQ1) protein is Gamma-glutamyl phosphate reductase.